A 196-amino-acid polypeptide reads, in one-letter code: Dephospho-CoA kinase (196 aa).

In terms of domain architecture, DPCK spans 6–196 (AIALTGGIGT…QVERFLKTLL (191 aa)). 14 to 19 (GTGKST) contacts ATP.

Belongs to the CoaE family.

The protein localises to the cytoplasm. It carries out the reaction 3'-dephospho-CoA + ATP = ADP + CoA + H(+). The protein operates within cofactor biosynthesis; coenzyme A biosynthesis; CoA from (R)-pantothenate: step 5/5. Functionally, catalyzes the phosphorylation of the 3'-hydroxyl group of dephosphocoenzyme A to form coenzyme A. This Helicobacter pylori (strain J99 / ATCC 700824) (Campylobacter pylori J99) protein is Dephospho-CoA kinase.